The chain runs to 184 residues: uncharacterized protein (184 aa).

To M.tuberculosis Rv0487.

This is an uncharacterized protein from Mycobacterium leprae (strain TN).